A 429-amino-acid polypeptide reads, in one-letter code: Trigger factor (429 aa).

Positions 164–249 (GDWAVIDHEG…LKALKVRQAP (86 aa)) constitute a PPIase FKBP-type domain.

This sequence belongs to the FKBP-type PPIase family. Tig subfamily.

The protein localises to the cytoplasm. It catalyses the reaction [protein]-peptidylproline (omega=180) = [protein]-peptidylproline (omega=0). Functionally, involved in protein export. Acts as a chaperone by maintaining the newly synthesized protein in an open conformation. Functions as a peptidyl-prolyl cis-trans isomerase. This Anaeromyxobacter dehalogenans (strain 2CP-C) protein is Trigger factor.